A 148-amino-acid polypeptide reads, in one-letter code: SsrA-binding protein (148 aa).

Over residues 129–142 (ETEKKRDWEREKAR) the composition is skewed to basic and acidic residues. Residues 129-148 (ETEKKRDWEREKARIMRAGT) are disordered.

This sequence belongs to the SmpB family.

Its subcellular location is the cytoplasm. Its function is as follows. Required for rescue of stalled ribosomes mediated by trans-translation. Binds to transfer-messenger RNA (tmRNA), required for stable association of tmRNA with ribosomes. tmRNA and SmpB together mimic tRNA shape, replacing the anticodon stem-loop with SmpB. tmRNA is encoded by the ssrA gene; the 2 termini fold to resemble tRNA(Ala) and it encodes a 'tag peptide', a short internal open reading frame. During trans-translation Ala-aminoacylated tmRNA acts like a tRNA, entering the A-site of stalled ribosomes, displacing the stalled mRNA. The ribosome then switches to translate the ORF on the tmRNA; the nascent peptide is terminated with the 'tag peptide' encoded by the tmRNA and targeted for degradation. The ribosome is freed to recommence translation, which seems to be the essential function of trans-translation. This chain is SsrA-binding protein, found in Burkholderia orbicola (strain AU 1054).